The following is a 262-amino-acid chain: Cytochrome c oxidase subunit 3 (262 aa).

7 consecutive transmembrane segments (helical) span residues 16 to 36, 42 to 59, 83 to 103, 128 to 148, 163 to 183, 198 to 218, and 240 to 260; these read PWPLTGAIGAMTTVTGLVQWF, TLFLLGNIITMLTMYQWW, GMILFIISEVFFFISFFWAFF, FQIPLLNTAILLASGVTVTWA, SLFFTVLLGIYFSILQAYEYI, FFVATGFHGLHVLIGTSFLLI, and AWYWHFVDVVWLFLYISIYWW.

It belongs to the cytochrome c oxidase subunit 3 family. Component of the cytochrome c oxidase (complex IV, CIV), a multisubunit enzyme composed of a catalytic core of 3 subunits and several supernumerary subunits. The complex exists as a monomer or a dimer and forms supercomplexes (SCs) in the inner mitochondrial membrane with ubiquinol-cytochrome c oxidoreductase (cytochrome b-c1 complex, complex III, CIII).

It localises to the mitochondrion inner membrane. It carries out the reaction 4 Fe(II)-[cytochrome c] + O2 + 8 H(+)(in) = 4 Fe(III)-[cytochrome c] + 2 H2O + 4 H(+)(out). Its function is as follows. Component of the cytochrome c oxidase, the last enzyme in the mitochondrial electron transport chain which drives oxidative phosphorylation. The respiratory chain contains 3 multisubunit complexes succinate dehydrogenase (complex II, CII), ubiquinol-cytochrome c oxidoreductase (cytochrome b-c1 complex, complex III, CIII) and cytochrome c oxidase (complex IV, CIV), that cooperate to transfer electrons derived from NADH and succinate to molecular oxygen, creating an electrochemical gradient over the inner membrane that drives transmembrane transport and the ATP synthase. Cytochrome c oxidase is the component of the respiratory chain that catalyzes the reduction of oxygen to water. Electrons originating from reduced cytochrome c in the intermembrane space (IMS) are transferred via the dinuclear copper A center (CU(A)) of subunit 2 and heme A of subunit 1 to the active site in subunit 1, a binuclear center (BNC) formed by heme A3 and copper B (CU(B)). The BNC reduces molecular oxygen to 2 water molecules using 4 electrons from cytochrome c in the IMS and 4 protons from the mitochondrial matrix. The chain is Cytochrome c oxidase subunit 3 from Aedes aegypti (Yellowfever mosquito).